A 492-amino-acid polypeptide reads, in one-letter code: Cobyric acid synthase (492 aa).

Residues 252–440 form the GATase cobBQ-type domain; sequence QLNVVVPVLT…LHGIFEQTEA (189 aa). Residue cysteine 333 is the Nucleophile of the active site. Histidine 432 is a catalytic residue.

It belongs to the CobB/CobQ family. CobQ subfamily.

Its pathway is cofactor biosynthesis; adenosylcobalamin biosynthesis. In terms of biological role, catalyzes amidations at positions B, D, E, and G on adenosylcobyrinic A,C-diamide. NH(2) groups are provided by glutamine, and one molecule of ATP is hydrogenolyzed for each amidation. The sequence is that of Cobyric acid synthase from Photobacterium profundum (strain SS9).